Here is a 231-residue protein sequence, read N- to C-terminus: Monothiol glutaredoxin-6 (231 aa).

An N-terminal signal peptide occupies residues Met1–Ala29. Residues Gln116–Lys219 form the Glutaredoxin domain. Cys136 is a [2Fe-2S] cluster binding site.

The protein belongs to the glutaredoxin family. Monothiol subfamily.

It localises to the vacuole. In Saccharomyces cerevisiae (strain ATCC 204508 / S288c) (Baker's yeast), this protein is Monothiol glutaredoxin-6 (GRX6).